Consider the following 389-residue polypeptide: Acetylornithine aminotransferase (389 aa).

Pyridoxal 5'-phosphate-binding positions include 96-97 and F123; that span reads GT. R126 serves as a coordination point for N(2)-acetyl-L-ornithine. 207 to 210 contacts pyridoxal 5'-phosphate; that stretch reads DEVQ. K236 is subject to N6-(pyridoxal phosphate)lysine. S264 lines the N(2)-acetyl-L-ornithine pocket. T265 contributes to the pyridoxal 5'-phosphate binding site.

It belongs to the class-III pyridoxal-phosphate-dependent aminotransferase family. ArgD subfamily. In terms of assembly, homodimer. Requires pyridoxal 5'-phosphate as cofactor.

Its subcellular location is the cytoplasm. It carries out the reaction N(2)-acetyl-L-ornithine + 2-oxoglutarate = N-acetyl-L-glutamate 5-semialdehyde + L-glutamate. It participates in amino-acid biosynthesis; L-arginine biosynthesis; N(2)-acetyl-L-ornithine from L-glutamate: step 4/4. This Lactiplantibacillus plantarum (strain ATCC BAA-793 / NCIMB 8826 / WCFS1) (Lactobacillus plantarum) protein is Acetylornithine aminotransferase.